The sequence spans 659 residues: DNA mismatch repair protein MutL (659 aa).

It belongs to the DNA mismatch repair MutL/HexB family.

In terms of biological role, this protein is involved in the repair of mismatches in DNA. It is required for dam-dependent methyl-directed DNA mismatch repair. May act as a 'molecular matchmaker', a protein that promotes the formation of a stable complex between two or more DNA-binding proteins in an ATP-dependent manner without itself being part of a final effector complex. This chain is DNA mismatch repair protein MutL, found in Ligilactobacillus salivarius (strain UCC118) (Lactobacillus salivarius).